We begin with the raw amino-acid sequence, 153 residues long: Histone H2B.6 (153 aa).

2 stretches are compositionally biased toward basic and acidic residues: residues Met1–Pro28 and Glu36–Lys53. The segment at Met1–Lys60 is disordered. N6-acetyllysine is present on residues Lys7 and Lys37. A Glycyl lysine isopeptide (Lys-Gly) (interchain with G-Cter in ubiquitin) cross-link involves residue Lys149.

This sequence belongs to the histone H2B family. In terms of assembly, the nucleosome is a histone octamer containing two molecules each of H2A, H2B, H3 and H4 assembled in one H3-H4 heterotetramer and two H2A-H2B heterodimers. The octamer wraps approximately 147 bp of DNA. Can be acetylated to form H2BK6ac and H2BK33ac. Post-translationally, monoubiquitinated by BRE1 to form H2BK143ub1 and deubiquitinated by UBP26. Required for heterochromatic histone H3 di- and trimethylation at H3K4me. May give a specific tag for epigenetic transcriptional activation.

It is found in the nucleus. Its subcellular location is the chromosome. In terms of biological role, core component of nucleosome. Nucleosomes wrap and compact DNA into chromatin, limiting DNA accessibility to the cellular machineries which require DNA as a template. Histones thereby play a central role in transcription regulation, DNA repair, DNA replication and chromosomal stability. DNA accessibility is regulated via a complex set of post-translational modifications of histones, also called histone code, and nucleosome remodeling. This is Histone H2B.6 (H2B.6) from Oryza sativa subsp. japonica (Rice).